We begin with the raw amino-acid sequence, 262 residues long: Acyl-[acyl-carrier-protein]--UDP-N-acetylglucosamine O-acyltransferase (262 aa).

It belongs to the transferase hexapeptide repeat family. LpxA subfamily. As to quaternary structure, homotrimer.

It is found in the cytoplasm. The enzyme catalyses a (3R)-hydroxyacyl-[ACP] + UDP-N-acetyl-alpha-D-glucosamine = a UDP-3-O-[(3R)-3-hydroxyacyl]-N-acetyl-alpha-D-glucosamine + holo-[ACP]. Its pathway is glycolipid biosynthesis; lipid IV(A) biosynthesis; lipid IV(A) from (3R)-3-hydroxytetradecanoyl-[acyl-carrier-protein] and UDP-N-acetyl-alpha-D-glucosamine: step 1/6. In terms of biological role, involved in the biosynthesis of lipid A, a phosphorylated glycolipid that anchors the lipopolysaccharide to the outer membrane of the cell. The protein is Acyl-[acyl-carrier-protein]--UDP-N-acetylglucosamine O-acyltransferase of Pectobacterium atrosepticum (strain SCRI 1043 / ATCC BAA-672) (Erwinia carotovora subsp. atroseptica).